Here is a 745-residue protein sequence, read N- to C-terminus: MGKPTGKKKNNNYTEMPPTESSTTGGGKTGKSFDRSATKSFDDDMTIFINRALELKEEGNKLFQKRDYEGAMFRYDKAVKLLPRDHGDVAYLRTSMASCYMQMGLGEYPNAINECNLALEASPRFSKALLKRARCYEALNKLDFAFRDSRVVLNMEPENVSANEIFERVKKVLVGKGIDVDEMEKNLVNVQPVGAARLRKIVKERLRKKKKKSMTMTNGGNDGERKSVEAVVEDAKVDNGEEVDSGRKGKAIEEKKLEDKVAVMDKEVIASEIKEDATVTRTVKLVHGDDIRWAQLPLDSSVVLVRDVIKDRFPALKGFLIKYRDSEGDLVTITTTDELRLAASTREKLGSFRLYIAEVSPNQEPTYDVIDNDESTDKFAKGSSSVADNGSVGDFVESEKASTSLEHWIFQFAQLFKNHVGFDSDSYLELHNLGMKLYTEAMEDIVTGEDAQELFDIAADKFQEMAALAMFNWGNVHMSKARRQIYFPEDGSRETILEKVEAGFEWAKNEYNKAAEKYEGAVKIKSDFYEALLALGQQQFEQAKLCWYHALSGEVDIESDASQDVLKLYNKAEESMEKGMQIWEEMEERRLNGISNFDKHKELLQKLGLDGIFSEASDEESAEQTANMSSQINLLWGSLLYERSIVEYKLGLPTWDECLEVAVEKFELAGASATDIAVMVKNHCSSDNALEGMGFKIDEIVQAWNEMYDAKRWQIGVPSFRLEPLFRRRSPKLHDILENVFSGPQ.

Over residues methionine 1 to asparagine 10 the composition is skewed to basic residues. Positions methionine 1–alanine 37 are disordered. TPR repeat units follow at residues alanine 52 to aspartate 85, alanine 90 to phenylalanine 125, and serine 126 to asparagine 159. One can recognise a PB1 domain in the interval threonine 280 to valine 359. TPR repeat units follow at residues glutamate 406–alanine 441, glutamate 443–asparagine 472, glutamate 494–phenylalanine 528, and glycine 553–methionine 586.

Interacts with myosin XI-1 and XI-K.

The protein resides in the cytoplasmic vesicle membrane. Functionally, carboxylate clamp type tetratricopeptide repeat protein that may act as a potential Hsp90/Hsp70 co-chaperone. Contributes to polar growth of root hairs. The chain is Protein PHOX1 from Arabidopsis thaliana (Mouse-ear cress).